A 312-amino-acid polypeptide reads, in one-letter code: Acetyl-coenzyme A carboxylase carboxyl transferase subunit alpha (312 aa).

Residues 32–286 enclose the CoA carboxyltransferase C-terminal domain; sequence LLEERLARLR…KEALLKALEE (255 aa).

This sequence belongs to the AccA family. Acetyl-CoA carboxylase is a heterohexamer composed of biotin carboxyl carrier protein (AccB), biotin carboxylase (AccC) and two subunits each of ACCase subunit alpha (AccA) and ACCase subunit beta (AccD).

The protein resides in the cytoplasm. The enzyme catalyses N(6)-carboxybiotinyl-L-lysyl-[protein] + acetyl-CoA = N(6)-biotinyl-L-lysyl-[protein] + malonyl-CoA. Its pathway is lipid metabolism; malonyl-CoA biosynthesis; malonyl-CoA from acetyl-CoA: step 1/1. Component of the acetyl coenzyme A carboxylase (ACC) complex. First, biotin carboxylase catalyzes the carboxylation of biotin on its carrier protein (BCCP) and then the CO(2) group is transferred by the carboxyltransferase to acetyl-CoA to form malonyl-CoA. The polypeptide is Acetyl-coenzyme A carboxylase carboxyl transferase subunit alpha (Thermus thermophilus (strain ATCC BAA-163 / DSM 7039 / HB27)).